The chain runs to 799 residues: Homeobox protein engrailed (799 aa).

Disordered stretches follow at residues 189-331, 369-444, 554-664, and 678-705; these read LPSR…DATK, GNFL…SLRQ, HPFL…DKAK, and SDRP…RTAF. Positions 210–222 are enriched in polar residues; the sequence is QSPSTSIRSNLVS. Composition is skewed to basic and acidic residues over residues 228–239 and 246–256; these read SRRDDQETSDSC and RAINDSERYDV. 2 stretches are compositionally biased toward polar residues: residues 284–299 and 377–401; these read LNLT…QLFH and HTFQ…SSPD. Over residues 416–431 the composition is skewed to low complexity; sequence ESLSSPSSSSSSSRSS. Basic and acidic residues-rich tracts occupy residues 608–619 and 629–648; these read DQKKRSRDESAS and VHLK…EKGN. The segment at residues 698-757 is a DNA-binding region (homeobox); that stretch reads EKRPRTAFTNDQLQRLKREFDECRYLTETRRKNLADELGLTESQIKIWFQNKRAKIKKSV.

It belongs to the engrailed homeobox family. Expressed in the dorsal ectoderm of early gastrulae in a band corresponding to the peripheral area of the presumptive shell gland. Also expressed at four points along the posterior ectoderm. In late gastrulae, it is predominantly expressed in the peripheral ectoderm of the shell gland and in spots at the posterior end behind the presumptive foot. Expressed in late trochophore larvae at four points behind the foot, at two locations at the base of the foot and in the peripheral ectoderm of the shell gland.

It is found in the nucleus. In terms of biological role, may be involved in shell and shell gland formation during development. In Lymnaea stagnalis (Great pond snail), this protein is Homeobox protein engrailed.